Consider the following 1198-residue polypeptide: Integrator complex subunit 2 (1198 aa).

A helical membrane pass occupies residues 421 to 437 (FVSLSFCMLLAFSTLVS).

This sequence belongs to the Integrator subunit 2 family. As to quaternary structure, component of the Integrator complex, composed of core subunits INTS1, INTS2, INTS3, INTS4, INTS5, INTS6, INTS7, INTS8, INTS9/RC74, INTS10, INTS11/CPSF3L, INTS12, INTS13, INTS14 and INTS15. The core complex associates with protein phosphatase 2A subunits PPP2CA and PPP2R1A, to form the Integrator-PP2A (INTAC) complex.

The protein localises to the nucleus. It localises to the nucleus membrane. Its subcellular location is the cytoplasm. In terms of biological role, component of the integrator complex, a multiprotein complex that terminates RNA polymerase II (Pol II) transcription in the promoter-proximal region of genes. The integrator complex provides a quality checkpoint during transcription elongation by driving premature transcription termination of transcripts that are unfavorably configured for transcriptional elongation: the complex terminates transcription by (1) catalyzing dephosphorylation of the C-terminal domain (CTD) of Pol II subunit POLR2A/RPB1 and SUPT5H/SPT5, (2) degrading the exiting nascent RNA transcript via endonuclease activity and (3) promoting the release of Pol II from bound DNA. The integrator complex is also involved in terminating the synthesis of non-coding Pol II transcripts, such as enhancer RNAs (eRNAs), small nuclear RNAs (snRNAs), telomerase RNAs and long non-coding RNAs (lncRNAs). Mediates recruitment of cytoplasmic dynein to the nuclear envelope, probably as component of the integrator complex. This Mus musculus (Mouse) protein is Integrator complex subunit 2 (Ints2).